The primary structure comprises 632 residues: DNA mismatch repair protein MutL (632 aa).

It belongs to the DNA mismatch repair MutL/HexB family.

This protein is involved in the repair of mismatches in DNA. It is required for dam-dependent methyl-directed DNA mismatch repair. May act as a 'molecular matchmaker', a protein that promotes the formation of a stable complex between two or more DNA-binding proteins in an ATP-dependent manner without itself being part of a final effector complex. The sequence is that of DNA mismatch repair protein MutL from Pseudomonas putida (strain GB-1).